Consider the following 1372-residue polypeptide: MMTASFKGIRISKPIVKEISSFGSLTNIDLHTDPYEKVEAKALSRSRLKNQSVKKTDLRITNDYSSLFVSIENKKNTIPDIHCNNLSKRPVGFTDSYVPGEALLCPDDPNLVNELFDDVLKRLREEKSDSGEQFHWDANVTLSQENKWSFITGYLSRNDKFLKISSNDSELNVKASVISYIEKLSCTPLKLKYVESLAVALRTESVTWVRYFLLMGGHIVLAKILQAIHEKKHLKSPDITLEIAILKSMRCIIGQKIGTDFYLSNKYPIDSVVHCLLSTKLLVRKLAAELLTFLCYSEKPNGINAIMKCMKNFANLKVESMNVFDLWLSQWKRTLLEKVVTEEKKVLEEAALHDKITIEYIISQMLLINAFLENIPSKTALLQFKESLRIGNFKSILLILKKINDEGVLKQLEKCVKLVSLDTANEKHFLKHTPNSAAHQSLLNTNMFNDANFEFMVKEHIKNFLKLLKEHNNPVRIIKLLDCLVLTLQADKGNGNSNNDIDCFYKELKIGNEQGNNAPGYSSVTSGYGTTNSKKVVASYDNTDDNEYSVSKSELYATGDTNNTTNQGYENSERKYVESSKYETDLKNIFDCLCLLFPSEFDPQSSFSAEKIFSKLKHLLTRTRDSYISEDTKILRLLNRSSSKLQDRDQEYLISKNNVNGNGNRDWVQPVNTTSSVSAFASPRIKPKLLFQPNQDEKLKLCKLDLAKANSITLKSEPSSAVSTHSFEVHLSMPGTQIKSANLAEKMETSKHKVFNPKRIDVVSDLPLDYRKSYYGRFSITDTKRFSKIENMRIKEVIDGNPFKAPPPAPLPPPAPPLPTAMSSLQKFEKNDSQIFRKTIIIPENISIDDIFKFCSGSESEVYASKIPGELCNPSKRLKQLHWKRLEVPFEKTLWNIVVADPYLLTLKLTAEGIFKQLEDCYPLREVTVSNKKVKEYTGFMPVDLQQMVSIRLHRFNSLTPIEIAKKFFHCDHDIMELVDFFNDRKFFRQEGLKKQLKPYMSSRNEEVMEVSEKLLELSRFDQIYTLIVVDIDTYYEKRMAALKIKSFLANNFRDFRRQIRKLHCASLELKSSLHFKYFLNLVLHIGNFMNDAPRRAKGYRLESLLRASMIKNDKTGLTLLHTIEKIVRTHFPQLEAFLVDLKAIPEISRFNLEQLEQDCNDICERMKNVEKDFSNEGIFSNHKALHPDDHICEVMVPWIPSGKSMVDELNSDITELKTTLKTTLLMYGENPDEPTSSARFFNNLNEIILEYKKASTVNQKMEKEEELAFLRLQALKASVKSNNAENSGSSKNEEVSATMENLISQLQKGLCDDSLSNKTDCTESSKQTIETLMNYENDKQTLEGSNKKRQTVVLKAECMLKQLENNNELKR.

One can recognise a GBD/FH3 domain in the interval 104–522; sequence LCPDDPNLVN…EQGNNAPGYS (419 aa). Positions 802–817 match the SH3-binding motif; it reads PFKAPPPAPLPPPAPP. Positions 868 to 1278 constitute an FH2 domain; it reads PGELCNPSKR…AFLRLQALKA (411 aa).

The protein belongs to the formin homology family. BNI1 subfamily. In terms of assembly, interacts with actin at the FH2 domain.

Its subcellular location is the cytoplasm. Its function is as follows. Required for cell fusion. It associates with the pre-zygotic projection tips in conjugating cells. This is Cell fusion protein fus1 (fus1) from Schizosaccharomyces pombe (strain 972 / ATCC 24843) (Fission yeast).